The chain runs to 240 residues: MTRSSSDRAIVVPAAQNALFTDSPFPTPESRLIAGVDEAGRGPLAGPVAVAAVVFDPAKPRINGLDDSKQLSAERREQLYARIVDRALAWSVVLIDSEEIDRINIYQATMLGMRRAVEGVAHVAGFARIDGNRVPKGLPCPAEALIGGDALDRAIMAASIVAKVTRDRLMRELHAQHPQYRFDLHKGYSTPAHLAALQTHGPCPQHRRSFAPVRRALGLETAQTAWDVPCAPADGLLLAE.

The region spanning 31 to 222 (RLIAGVDEAG…VRRALGLETA (192 aa)) is the RNase H type-2 domain. A divalent metal cation contacts are provided by Asp-37, Glu-38, and Asp-130.

It belongs to the RNase HII family. Mn(2+) serves as cofactor. It depends on Mg(2+) as a cofactor.

The protein localises to the cytoplasm. The catalysed reaction is Endonucleolytic cleavage to 5'-phosphomonoester.. Its function is as follows. Endonuclease that specifically degrades the RNA of RNA-DNA hybrids. This Xanthomonas campestris pv. campestris (strain 8004) protein is Ribonuclease HII.